A 557-amino-acid polypeptide reads, in one-letter code: DNA ligase (557 aa).

ATP is bound at residue E249. K251 (N6-AMP-lysine intermediate) is an active-site residue. ATP is bound by residues R256, R271, E301, F340, R417, and K423.

It belongs to the ATP-dependent DNA ligase family. It depends on Mg(2+) as a cofactor.

It carries out the reaction ATP + (deoxyribonucleotide)n-3'-hydroxyl + 5'-phospho-(deoxyribonucleotide)m = (deoxyribonucleotide)n+m + AMP + diphosphate.. Its function is as follows. DNA ligase that seals nicks in double-stranded DNA during DNA replication, DNA recombination and DNA repair. In Methanothermobacter thermautotrophicus (Methanobacterium thermoformicicum), this protein is DNA ligase.